The sequence spans 266 residues: U2 small nuclear ribonucleoprotein A' (266 aa).

4 LRR repeats span residues 30–51 (ILRN…NHLA), 53–74 (PTHI…HHRD), 75–95 (DIET…ALLP), and 97–118 (KLKS…IPLS). The 39-residue stretch at 132 to 170 (NPICHLSEYRQRILALVPSLEVLDFKLVSQAEKAQAVKD) folds into the LRRCT domain.

It belongs to the U2 small nuclear ribonucleoprotein A family. In terms of assembly, associated with the spliceosome.

The protein localises to the nucleus. Functionally, involved in pre-mRNA splicing. The sequence is that of U2 small nuclear ribonucleoprotein A' (LEA1) from Candida glabrata (strain ATCC 2001 / BCRC 20586 / JCM 3761 / NBRC 0622 / NRRL Y-65 / CBS 138) (Yeast).